A 417-amino-acid polypeptide reads, in one-letter code: Zinc finger protein CONSTANS-LIKE 16 (417 aa).

The Zn(2+) site is built by Cys17, Cys20, Cys40, and His45. A B box-type; atypical zinc finger spans residues 17-59 (CDSCVKRRARWYCAADDAFLCQSCDSLVHSANPLARRHERVRL). The segment at 63–105 (SPAVVKHSNHSSASPPHEVATWHHGFTRKARTPRGSGKKNNSS) is disordered. The stretch at 212-239 (LSNSEMFKIEKDEIEEEVEEIKAMSMDI) forms a coiled coil. The region spanning 361–403 (REARVSRYREKRRTRLFSKKIRYEVRKLNAEKRPRMKGRFVKR) is the CCT domain.

Belongs to the CONSTANS family.

Its subcellular location is the nucleus. In Arabidopsis thaliana (Mouse-ear cress), this protein is Zinc finger protein CONSTANS-LIKE 16 (COL16).